A 270-amino-acid chain; its full sequence is A-type potassium channel modulatory protein KCNIP2 (270 aa).

Positions 1-17 are enriched in basic and acidic residues; the sequence is MRGQGRKESLSDSRDLD. A disordered region spans residues 1–33; that stretch reads MRGQGRKESLSDSRDLDGSYDQLTGHPPGPTKK. Residue S9 is modified to Phosphoserine. 2 S-palmitoyl cysteine lipidation sites follow: C45 and C46. The EF-hand 1; degenerate domain occupies 81–137; the sequence is FELSTVCHRPEGLEQLQEQTKFTRKELQVLYRGFKNECPSGIVNEENFKQIYSQFFP. 3 consecutive EF-hand domains span residues 140–175, 176–211, and 224–259; these read DSST…ILRG, TIDD…IYDM, and APRE…DENI. 14 residues coordinate Ca(2+): D153, N155, D157, S159, D164, D189, N191, D193, C195, E200, D237, N239, D241, and E248. The interaction with KCND2 stretch occupies residues 257–270; sequence ENIMRSMQLFDNVI.

Belongs to the recoverin family. Component of heteromultimeric potassium channels. Identified in potassium channel complexes containing KCND1, KCND2, KCND3, KCNIP1, KCNIP2, KCNIP3, KCNIP4, DPP6 and DPP10. The KCND2-KCNIP2 channel complex contains four KCND2 and four KCNIP2 subunits. Interacts with KCND2. Probably part of a complex consisting of KCNIP1, KCNIP2 isoform 3 and KCND2. At least isoform 2 and isoform 3 can self-associate to form homodimers and homotetramers. Isoform 3 interacts with KCNIP1 in a calcium-dependent manner. Interacts with KCND3; each KCNIP2 monomer interacts with two adjacent KCND3 subunits, through both the N-terminal inactivation ball of a KCND3 subunit and a C-terminal helix from the adjacent KCND3 subunit, clamping them together; this interaction modulates the channel gating kinetics. Palmitoylated. Palmitoylation enhances association with the plasma membrane. As to expression, expressed in heart ventricle with isoform 1 as most prominent form.

The protein resides in the cell membrane. Functionally, regulatory subunit of Kv4/D (Shal)-type voltage-gated rapidly inactivating A-type potassium channels. Modulates channel density, inactivation kinetics and rate of recovery from inactivation in a calcium-dependent and isoform-specific manner. Involved in KCND2 and KCND3 trafficking to the cell surface. May be required for the expression of I(To) currents in the heart. The protein is A-type potassium channel modulatory protein KCNIP2 of Mustela putorius furo (European domestic ferret).